The chain runs to 538 residues: Nicotinate phosphoribosyltransferase (538 aa).

Residues Y21 and T210 each contribute to the nicotinate site. H213 bears the Phosphohistidine mark. R318 lines the nicotinate pocket. T380 is a 5-phospho-alpha-D-ribose 1-diphosphate binding site.

The protein belongs to the NAPRTase family. In terms of assembly, homodimer. Mg(2+) serves as cofactor. Mn(2+) is required as a cofactor. Post-translationally, transiently phosphorylated on a His residue during the reaction cycle. Phosphorylation strongly increases the affinity for substrates and increases the rate of nicotinate D-ribonucleotide production. Dephosphorylation regenerates the low-affinity form of the enzyme, leading to product release. In terms of tissue distribution, abundantly expressed in the small intestine, liver and kidney.

It localises to the cytoplasm. It is found in the cytosol. The enzyme catalyses nicotinate + 5-phospho-alpha-D-ribose 1-diphosphate + ATP + H2O = nicotinate beta-D-ribonucleotide + ADP + phosphate + diphosphate. Its pathway is cofactor biosynthesis; NAD(+) biosynthesis; nicotinate D-ribonucleotide from nicotinate: step 1/1. Its function is as follows. Catalyzes the first step in the biosynthesis of NAD from nicotinic acid, the ATP-dependent synthesis of beta-nicotinate D-ribonucleotide from nicotinate and 5-phospho-D-ribose 1-phosphate. Helps prevent cellular oxidative stress via its role in NAD biosynthesis. This chain is Nicotinate phosphoribosyltransferase (Naprt), found in Mus musculus (Mouse).